The chain runs to 129 residues: Replication initiation control protein YabA (129 aa).

4 residues coordinate Zn(2+): H103, C105, C119, and C122.

It belongs to the YabA family. As to quaternary structure, homotetramer. Interacts with both DnaA and DnaN, acting as a bridge between these two proteins. It depends on Zn(2+) as a cofactor.

It localises to the cytoplasm. It is found in the nucleoid. Involved in control of chromosome replication initiation. Inhibits the cooperative binding of DnaA to the oriC region, thus negatively regulating initiation of chromosome replication. Inhibits the ability of DnaA-ATP to form a helix on DNA; does not disassemble preformed DnaA-DNA helices. Decreases the residence time of DnaA on the chromosome at its binding sites (oriC, replication forks and promoter-binding sites). Tethers DnaA to the replication machinery via the DNA polymerase beta sliding clamp subunit (dnaN). Associates with oriC and other DnaA targets on the chromosome in a DnaA-dependent manner. The chain is Replication initiation control protein YabA from Listeria innocua serovar 6a (strain ATCC BAA-680 / CLIP 11262).